The chain runs to 255 residues: Ribosomal RNA small subunit methyltransferase G (255 aa).

S-adenosyl-L-methionine is bound by residues Gly-89, Phe-94, 112 to 114 (DST), 140 to 141 (VE), and Arg-159.

Belongs to the methyltransferase superfamily. RNA methyltransferase RsmG family.

The protein resides in the cytoplasm. Specifically methylates the N7 position of a guanine in 16S rRNA. The chain is Ribosomal RNA small subunit methyltransferase G from Trichodesmium erythraeum (strain IMS101).